A 142-amino-acid chain; its full sequence is Alpha-lactalbumin (142 aa).

The first 19 residues, 1–19 (MMSFVSLLLVGILFHATQA), serve as a signal peptide directing secretion. One can recognise a C-type lysozyme domain in the interval 20-142 (EQLTKCEVFQ…KLDQWLCEKL (123 aa)). Disulfide bonds link Cys25/Cys139, Cys47/Cys130, Cys80/Cys96, and Cys92/Cys110. N-linked (GlcNAc...) asparagine glycosylation is found at Asn64 and Asn93. 5 residues coordinate Ca(2+): Lys98, Asp101, Asp103, Asp106, and Asp107.

The protein belongs to the glycosyl hydrolase 22 family. In terms of assembly, lactose synthase (LS) is a heterodimer of a catalytic component, beta1,4-galactosyltransferase (beta4Gal-T1) and a regulatory component, alpha-lactalbumin (LA). Mammary gland specific. Secreted in milk.

It localises to the secreted. Functionally, regulatory subunit of lactose synthase, changes the substrate specificity of galactosyltransferase in the mammary gland making glucose a good acceptor substrate for this enzyme. This enables LS to synthesize lactose, the major carbohydrate component of milk. In other tissues, galactosyltransferase transfers galactose onto the N-acetylglucosamine of the oligosaccharide chains in glycoproteins. The chain is Alpha-lactalbumin (LALBA) from Capra hircus (Goat).